We begin with the raw amino-acid sequence, 185 residues long: Ribosome-recycling factor (185 aa).

The protein belongs to the RRF family.

It is found in the cytoplasm. Responsible for the release of ribosomes from messenger RNA at the termination of protein biosynthesis. May increase the efficiency of translation by recycling ribosomes from one round of translation to another. The protein is Ribosome-recycling factor of Saccharopolyspora erythraea (strain ATCC 11635 / DSM 40517 / JCM 4748 / NBRC 13426 / NCIMB 8594 / NRRL 2338).